The following is a 215-amino-acid chain: Floral homeotic protein GLOBOSA (215 aa).

The MADS-box domain maps to 3-57 (RGKIEIKRIENSSNRQVTYSKRRNGIMKKAKEISVLCDAHVSVIIFASSGKMHEF). The 87-residue stretch at 84–170 (HEHLDNEINR…QFKLRQMHLD (87 aa)) folds into the K-box domain.

It localises to the nucleus. Functionally, transcription factor involved in the genetic control of flower development. Acts in conjunction with DEFICIENS (defA). The sequence is that of Floral homeotic protein GLOBOSA (GLO) from Antirrhinum majus (Garden snapdragon).